Reading from the N-terminus, the 336-residue chain is Ferredoxin--NADP reductase 1 (336 aa).

Glu-37, Lys-45, Phe-50, Val-90, Leu-125, Asp-287, and Thr-328 together coordinate FAD.

The protein belongs to the ferredoxin--NADP reductase type 2 family. Homodimer. It depends on FAD as a cofactor.

It carries out the reaction 2 reduced [2Fe-2S]-[ferredoxin] + NADP(+) + H(+) = 2 oxidized [2Fe-2S]-[ferredoxin] + NADPH. The polypeptide is Ferredoxin--NADP reductase 1 (Bacillus velezensis (strain DSM 23117 / BGSC 10A6 / LMG 26770 / FZB42) (Bacillus amyloliquefaciens subsp. plantarum)).